The following is a 102-amino-acid chain: Large ribosomal subunit protein bL21 (102 aa).

It belongs to the bacterial ribosomal protein bL21 family. Part of the 50S ribosomal subunit. Contacts protein L20.

In terms of biological role, this protein binds to 23S rRNA in the presence of protein L20. The sequence is that of Large ribosomal subunit protein bL21 from Campylobacter jejuni subsp. jejuni serotype O:6 (strain 81116 / NCTC 11828).